The sequence spans 927 residues: Solute carrier family 12 protein B0303.11 (927 aa).

Over 1-23 (MPSSTASSEDAPITSTAWMNWKD) the chain is Cytoplasmic. The chain crosses the membrane as a helical span at residues 24 to 44 (VFLKCVQPMLAVVLLLRFSSI). The Extracellular portion of the chain corresponds to 45–53 (VDEAGFTTT). Residues 54 to 74 (IILVFFTFLVSLVTGWSACTV) form a helical membrane-spanning segment. The Cytoplasmic portion of the chain corresponds to 75–95 (VSRKSSEVGFVKTMLAYSSTE). A helical membrane pass occupies residues 96–116 (FAISFSIIYLFCLLVATSTFL). At 117-141 (TSAAEAVLHIFSTFSLELLDGATHD) the chain is on the extracellular side. The chain crosses the membrane as a helical span at residues 142–159 (LRLVSSVLSLITLALCMV). Residues 160-165 (RNRNAR) are Cytoplasmic-facing. The helical transmembrane segment at 166-186 (FVRTFIFALTCIAIALQLSSV) threads the bilayer. The Extracellular portion of the chain corresponds to 187–212 (MFRYGEYQLRRVSDRNAMIPSPPNEE). The chain crosses the membrane as a helical span at residues 213 to 233 (ISTIFAQLFPAAMCGLTILNI). At 234–244 (GSKLQNTAPRG) the chain is on the cytoplasmic side. Residues 245–265 (ALIAIAVSACFYGAAAMLDYV) form a helical membrane-spanning segment. At 266-284 (EFFARTSTSNSTGSAEYNE) the chain is on the extracellular side. N275 carries N-linked (GlcNAc...) asparagine glycosylation. Residues 285 to 305 (FLSYIYTTVPMAIVITLACVL) form a helical membrane-spanning segment. Residues 306–345 (SAVSTLKYAAVILQSLGRSNQCRCILWLAKGFGERDIPIR) lie on the Cytoplasmic side of the membrane. Residues 346-366 (CLLLLSTVQILVSAIGSYDIL) traverse the membrane as a helical segment. Residue C367 is a topological domain, extracellular. Residues 368 to 388 (IPTTVFYLFAYALFNFYVFLV) traverse the membrane as a helical segment. The Cytoplasmic portion of the chain corresponds to 389–394 (KLSDPE). A helical membrane pass occupies residues 395–415 (IPSPPTLLSLAISAACFIASL). The Extracellular portion of the chain corresponds to 416 to 419 (YTNR). Residues 420-440 (HLALFIASIFAISYCSLLYII) traverse the membrane as a helical segment. Topologically, residues 441–927 (RRERNEDGEE…SMSALRLKFP (487 aa)) are cytoplasmic.

It belongs to the SLC12A transporter family.

It is found in the cell membrane. This Caenorhabditis elegans protein is Solute carrier family 12 protein B0303.11.